The primary structure comprises 360 residues: Phospho-N-acetylmuramoyl-pentapeptide-transferase (360 aa).

The next 10 membrane-spanning stretches (helical) occupy residues 26–46, 70–90, 97–117, 132–152, 168–188, 199–219, 236–256, 263–283, 288–308, and 338–358; these read TILG…AVIQ, GTPT…TLLW, YVWV…VDDY, AKFF…FSTA, VVLP…VGSS, GLAI…AYAT, AGEV…FLWF, VFMG…LAVV, LVLL…MLQV, and VIVR…AMLK.

Belongs to the glycosyltransferase 4 family. MraY subfamily. Requires Mg(2+) as cofactor.

It is found in the cell inner membrane. The catalysed reaction is UDP-N-acetyl-alpha-D-muramoyl-L-alanyl-gamma-D-glutamyl-meso-2,6-diaminopimeloyl-D-alanyl-D-alanine + di-trans,octa-cis-undecaprenyl phosphate = di-trans,octa-cis-undecaprenyl diphospho-N-acetyl-alpha-D-muramoyl-L-alanyl-D-glutamyl-meso-2,6-diaminopimeloyl-D-alanyl-D-alanine + UMP. It functions in the pathway cell wall biogenesis; peptidoglycan biosynthesis. Functionally, catalyzes the initial step of the lipid cycle reactions in the biosynthesis of the cell wall peptidoglycan: transfers peptidoglycan precursor phospho-MurNAc-pentapeptide from UDP-MurNAc-pentapeptide onto the lipid carrier undecaprenyl phosphate, yielding undecaprenyl-pyrophosphoryl-MurNAc-pentapeptide, known as lipid I. The chain is Phospho-N-acetylmuramoyl-pentapeptide-transferase from Alkalilimnicola ehrlichii (strain ATCC BAA-1101 / DSM 17681 / MLHE-1).